We begin with the raw amino-acid sequence, 291 residues long: Pantothenate synthetase 1 (291 aa).

Catalysis depends on histidine 37, which acts as the Proton donor. 147 to 150 contacts ATP; the sequence is GEKD. Residue glutamine 153 coordinates (R)-pantoate. ATP is bound at residue 184 to 187; that stretch reads ISSR.

This sequence belongs to the pantothenate synthetase family. Homodimer.

It is found in the cytoplasm. It catalyses the reaction (R)-pantoate + beta-alanine + ATP = (R)-pantothenate + AMP + diphosphate + H(+). Its pathway is cofactor biosynthesis; (R)-pantothenate biosynthesis; (R)-pantothenate from (R)-pantoate and beta-alanine: step 1/1. In terms of biological role, catalyzes the condensation of pantoate with beta-alanine in an ATP-dependent reaction via a pantoyl-adenylate intermediate. The polypeptide is Pantothenate synthetase 1 (Frankia alni (strain DSM 45986 / CECT 9034 / ACN14a)).